A 663-amino-acid chain; its full sequence is Probable acetolactate synthase 2, chloroplastic (663 aa).

Low complexity predominate over residues 1 to 26; sequence MAAAAAAASLSVSDAAAKLPKPGGQV. Positions 1–56 are disordered; that stretch reads MAAAAAAASLSVSDAAAKLPKPGGQVQRRRDRDRPRVDAAACTRDSRRPTRERCST. The transit peptide at 1–79 directs the protein to the chloroplast; the sequence is MAAAAAAASL…TPVRAPVRTR (79 aa). Composition is skewed to basic and acidic residues over residues 28 to 37 and 44 to 54; these read RRRDRDRPRV and RDSRRPTRERC. Glu132 is a binding site for thiamine diphosphate. Cys152 and Cys298 are oxidised to a cystine. FAD contacts are provided by residues Arg234, 340–361, and 383–402; these read HGTV…LGVR and DIDP…ICAD. Residues 478 to 558 are thiamine pyrophosphate binding; the sequence is QHQMWATQHY…VKVMVLNNQH (81 aa). 2 residues coordinate Mg(2+): Asp529 and Asn556.

The protein belongs to the TPP enzyme family. It depends on Mg(2+) as a cofactor. Thiamine diphosphate serves as cofactor.

Its subcellular location is the plastid. It is found in the chloroplast. The catalysed reaction is 2 pyruvate + H(+) = (2S)-2-acetolactate + CO2. Its pathway is amino-acid biosynthesis; L-isoleucine biosynthesis; L-isoleucine from 2-oxobutanoate: step 1/4. The protein operates within amino-acid biosynthesis; L-valine biosynthesis; L-valine from pyruvate: step 1/4. In Oryza sativa subsp. japonica (Rice), this protein is Probable acetolactate synthase 2, chloroplastic (ALS2).